Consider the following 474-residue polypeptide: Bifunctional protein HldE (474 aa).

The interval 1–321 (MILSSSLRPT…EYLHSSHQGE (321 aa)) is ribokinase. Residue 198-201 (NKKE) coordinates ATP. Residue aspartate 266 is part of the active site. The segment at 348 to 474 (FTNGCFDILH…SAVVKKIQGS (127 aa)) is cytidylyltransferase.

It in the N-terminal section; belongs to the carbohydrate kinase PfkB family. In the C-terminal section; belongs to the cytidylyltransferase family. As to quaternary structure, homodimer.

The catalysed reaction is D-glycero-beta-D-manno-heptose 7-phosphate + ATP = D-glycero-beta-D-manno-heptose 1,7-bisphosphate + ADP + H(+). The enzyme catalyses D-glycero-beta-D-manno-heptose 1-phosphate + ATP + H(+) = ADP-D-glycero-beta-D-manno-heptose + diphosphate. It participates in nucleotide-sugar biosynthesis; ADP-L-glycero-beta-D-manno-heptose biosynthesis; ADP-L-glycero-beta-D-manno-heptose from D-glycero-beta-D-manno-heptose 7-phosphate: step 1/4. Its pathway is nucleotide-sugar biosynthesis; ADP-L-glycero-beta-D-manno-heptose biosynthesis; ADP-L-glycero-beta-D-manno-heptose from D-glycero-beta-D-manno-heptose 7-phosphate: step 3/4. Functionally, catalyzes the phosphorylation of D-glycero-D-manno-heptose 7-phosphate at the C-1 position to selectively form D-glycero-beta-D-manno-heptose-1,7-bisphosphate. In terms of biological role, catalyzes the ADP transfer from ATP to D-glycero-beta-D-manno-heptose 1-phosphate, yielding ADP-D-glycero-beta-D-manno-heptose. This is Bifunctional protein HldE from Wolinella succinogenes (strain ATCC 29543 / DSM 1740 / CCUG 13145 / JCM 31913 / LMG 7466 / NCTC 11488 / FDC 602W) (Vibrio succinogenes).